The primary structure comprises 94 residues: Aspartyl/glutamyl-tRNA(Asn/Gln) amidotransferase subunit C (94 aa).

Belongs to the GatC family. As to quaternary structure, heterotrimer of A, B and C subunits.

The enzyme catalyses L-glutamyl-tRNA(Gln) + L-glutamine + ATP + H2O = L-glutaminyl-tRNA(Gln) + L-glutamate + ADP + phosphate + H(+). It catalyses the reaction L-aspartyl-tRNA(Asn) + L-glutamine + ATP + H2O = L-asparaginyl-tRNA(Asn) + L-glutamate + ADP + phosphate + 2 H(+). Allows the formation of correctly charged Asn-tRNA(Asn) or Gln-tRNA(Gln) through the transamidation of misacylated Asp-tRNA(Asn) or Glu-tRNA(Gln) in organisms which lack either or both of asparaginyl-tRNA or glutaminyl-tRNA synthetases. The reaction takes place in the presence of glutamine and ATP through an activated phospho-Asp-tRNA(Asn) or phospho-Glu-tRNA(Gln). This chain is Aspartyl/glutamyl-tRNA(Asn/Gln) amidotransferase subunit C, found in Campylobacter jejuni subsp. jejuni serotype O:6 (strain 81116 / NCTC 11828).